A 241-amino-acid polypeptide reads, in one-letter code: Ribonuclease PH (241 aa).

Residues R89 and 127–129 (GTR) each bind phosphate.

Belongs to the RNase PH family. As to quaternary structure, homohexameric ring arranged as a trimer of dimers.

It carries out the reaction tRNA(n+1) + phosphate = tRNA(n) + a ribonucleoside 5'-diphosphate. Phosphorolytic 3'-5' exoribonuclease that plays an important role in tRNA 3'-end maturation. Removes nucleotide residues following the 3'-CCA terminus of tRNAs; can also add nucleotides to the ends of RNA molecules by using nucleoside diphosphates as substrates, but this may not be physiologically important. Probably plays a role in initiation of 16S rRNA degradation (leading to ribosome degradation) during starvation. This is Ribonuclease PH from Xanthomonas oryzae pv. oryzae (strain MAFF 311018).